The primary structure comprises 123 residues: Probable U6 snRNA-associated Sm-like protein LSm4 (123 aa).

The region spanning 3–76 (LPLSLLKTAQ…IKYLRIPETV (74 aa)) is the Sm domain. The segment covering 85 to 97 (NEVRRQQQREQSR) has biased composition (basic and acidic residues). The segment at 85 to 123 (NEVRRQQQREQSRGRGGGRGGRGGHRGGGGNRGGRGGAR) is disordered. Gly residues predominate over residues 98-123 (GRGGGRGGRGGHRGGGGNRGGRGGAR).

The protein belongs to the snRNP Sm proteins family. Component of the precatalytic spliceosome (spliceosome B complex). Component of the U4/U6-U5 tri-snRNP complex, a building block of the precatalytic spliceosome (spliceosome B complex). LSM2, LSM3, LSM4, LSM5, LSM6, LSM7 and LSM8 form a heptameric, ring-shaped subcomplex (the LSM2-8 complex) that is part of the U4/U6-U5 tri-snRNP complex and the precatalytic spliceosome.

Its subcellular location is the nucleus. In terms of biological role, plays a role in pre-mRNA splicing as component of the U4/U6-U5 tri-snRNP complex that is involved in spliceosome assembly, and as component of the precatalytic spliceosome (spliceosome B complex). The heptameric LSM2-8 complex binds specifically to the 3'-terminal U-tract of U6 snRNA. This chain is Probable U6 snRNA-associated Sm-like protein LSm4 (lsm-4), found in Caenorhabditis elegans.